Here is a 180-residue protein sequence, read N- to C-terminus: Mitochondrial inner membrane protease subunit 2 (180 aa).

The chain crosses the membrane as a helical span at residues 19–39 (LVGITLWVPVLMFVEQHVVSV). Catalysis depends on residues S46 and K92.

This sequence belongs to the peptidase S26 family. IMP2 subfamily. Heterodimer of 2 subunits, imp1 and imp2.

It localises to the mitochondrion inner membrane. Catalyzes the removal of transit peptides required for the targeting of proteins from the mitochondrial matrix, across the inner membrane, into the inter-membrane space. The chain is Mitochondrial inner membrane protease subunit 2 from Schizosaccharomyces pombe (strain 972 / ATCC 24843) (Fission yeast).